We begin with the raw amino-acid sequence, 213 residues long: Imidazole glycerol phosphate synthase subunit HisH (213 aa).

In terms of domain architecture, Glutamine amidotransferase type-1 spans 4–211 (NIGLIDYGMG…LAWLKKETKD (208 aa)). The active-site Nucleophile is the cysteine 82. Residues histidine 186 and glutamate 188 contribute to the active site.

As to quaternary structure, heterodimer of HisH and HisF.

It is found in the cytoplasm. The enzyme catalyses 5-[(5-phospho-1-deoxy-D-ribulos-1-ylimino)methylamino]-1-(5-phospho-beta-D-ribosyl)imidazole-4-carboxamide + L-glutamine = D-erythro-1-(imidazol-4-yl)glycerol 3-phosphate + 5-amino-1-(5-phospho-beta-D-ribosyl)imidazole-4-carboxamide + L-glutamate + H(+). The catalysed reaction is L-glutamine + H2O = L-glutamate + NH4(+). It participates in amino-acid biosynthesis; L-histidine biosynthesis; L-histidine from 5-phospho-alpha-D-ribose 1-diphosphate: step 5/9. In terms of biological role, IGPS catalyzes the conversion of PRFAR and glutamine to IGP, AICAR and glutamate. The HisH subunit catalyzes the hydrolysis of glutamine to glutamate and ammonia as part of the synthesis of IGP and AICAR. The resulting ammonia molecule is channeled to the active site of HisF. The protein is Imidazole glycerol phosphate synthase subunit HisH of Prochlorococcus marinus (strain SARG / CCMP1375 / SS120).